The sequence spans 339 residues: MTSQPSLPADDFDIYHVLAECTDYYDTLPVKEADGNQPHFQGVTGLWNLGNTCCVNAISQCLCSILPLVEYFLTGKYITALQKFLLPSDCSEVATAFAYLMTDMWLGDSDCVSPEIFWSALGNLYPAFTKKMQQDAQEFLICVLNELHEALKKYHYSRRRSYEKGSTQRCCRKWITTETSIITQLFEEQLNYSIVCLKCEKCTYKNEVFTVFSLPIPSKYECSLRDCLQCFFQQDALTWNNEIHCSFCETKQETAVRASISKAPKIIIFHLKRFDIQGTTKRKLRTDIHYPLTNLDLTPYICSIFRKYPKYNLCAVVNHFGDLDGGHYTAFCKNSVTQA.

Positions 44-339 (TGLWNLGNTC…AFCKNSVTQA (296 aa)) constitute a USP domain. Cys53 functions as the Nucleophile in the catalytic mechanism. Residue His327 is the Proton acceptor of the active site.

It belongs to the peptidase C19 family. Weakly expressed in a few tissues.

It is found in the cytoplasm. Its subcellular location is the cytoskeleton. The protein localises to the microtubule organizing center. The protein resides in the centrosome. It localises to the nucleus. The enzyme catalyses Thiol-dependent hydrolysis of ester, thioester, amide, peptide and isopeptide bonds formed by the C-terminal Gly of ubiquitin (a 76-residue protein attached to proteins as an intracellular targeting signal).. Deubiquitinating enzyme that removes conjugated ubiquitin from specific proteins to regulate different cellular processes. Regulates the inflammasome signaling pathway by deubiquitinating 'Lys-63'-linked polyubiquitination of the PYCARD/ASC adapter protein. Regulates the ubiquitination and stability of the ACE2 protein. Acts as a negative regulator of the G2/M checkpoint pathway, by preventing serine/threonine kinase WEE1 degradation, thereby repressing entry into mitosis following activation of the G2/M DNA damage checkpoint. The polypeptide is Ubiquitin carboxyl-terminal hydrolase 50 (Homo sapiens (Human)).